Reading from the N-terminus, the 122-residue chain is Seminal vesicle secretory protein 5 (122 aa).

Positions 1–21 are cleaved as a signal peptide; sequence MSPTSFFLLTLLLVLVTEARG. Residues 23–122 form a disordered region; it reads RERFSQSAED…KTRVKSRILK (100 aa). Over residues 27-37 the composition is skewed to polar residues; it reads SQSAEDPSSSH.

It belongs to the SVP2/SVP5/SVP6 family. As to expression, testis.

The protein resides in the secreted. The protein localises to the extracellular space. This is Seminal vesicle secretory protein 5 (Svs5) from Mus musculus (Mouse).